Here is a 62-residue protein sequence, read N- to C-terminus: Defensin BmKDfsin4 (62 aa).

An N-terminal signal peptide occupies residues 1–24; that stretch reads MKTIVLLFVLALVFCTLEMGIVEA. 3 cysteine pairs are disulfide-bonded: cysteine 28–cysteine 49, cysteine 35–cysteine 57, and cysteine 39–cysteine 59.

It belongs to the invertebrate defensin family. Type 2 subfamily.

The protein localises to the secreted. Dual-function peptide with antimicrobial and potassium channel-blocking activities. Shows inhibitory activity against Gram-positive bacteria such as S.aureus, B.subtilis, and M.luteus as well as methicillin-resistant S.aureus (MIC=0.1-20 uM). Does not act on bacteria by disrupting membranes. Also moderately inhibits Kv1.1/KCNA1 (25.2% inhibition at 1 uM), Kv1.2/KCNA2 (30.5% inhibition at 1 uM), and Kv1.3/KCNA3 potassium channels (IC(50)=510.2 nM, 61% inhibition at 1 uM). Inhibits potassium channels by interacting with the pore region. Does not show hemolytic activity. In vitro, dose-dependently decreases the production of Hepatitis B virus (HBV) DNA and HBV viral proteins in both culture medium and cell lysate. The sequence is that of Defensin BmKDfsin4 from Olivierus martensii (Manchurian scorpion).